A 912-amino-acid chain; its full sequence is Eukaryotic translation initiation factor 3 subunit C (912 aa).

The segment at 1-44 is disordered; sequence MSRFFTTGSDSESESSLSGEELVTKPVGGNYGKQPLLLSEDEED. Residues 8–21 are compositionally biased toward low complexity; sequence GSDSESESSLSGEE. Residues serine 9, serine 11, serine 13, serine 15, serine 16, serine 18, and serine 39 each carry the phosphoserine modification. The residue at position 99 (lysine 99) is an N6-acetyllysine. Disordered stretches follow at residues 157–305 and 521–541; these read TNYK…RVRG and QLTP…NEGE. A phosphoserine mark is found at serine 166, serine 178, serine 181, and serine 182. The segment covering 166–190 has biased composition (acidic residues); the sequence is SADEDAEKNEEDSEGSSDEDEDDDG. The segment covering 199-215 has biased composition (basic and acidic residues); it reads KKSEAPSGDSRKFLKKE. The segment covering 216–229 has biased composition (acidic residues); the sequence is DEDEDSEESEDSEA. Basic and acidic residues predominate over residues 260–277; that stretch reads PTTEEDKKAAEKKREDKA. The span at 521–530 shows a compositional bias: polar residues; it reads QLTPPEGSSK. Phosphothreonine is present on threonine 523. Lysine 642 is subject to N6-acetyllysine. The region spanning 672–848 is the PCI domain; sequence FHLHINLELL…QTVVMHRTEP (177 aa). The segment at 884–912 is disordered; the sequence is FRDQKDGYRKNEGYMRRGGYRQQQSQTAY. The span at 885–898 shows a compositional bias: basic and acidic residues; that stretch reads RDQKDGYRKNEGYM. Serine 908 is subject to Phosphoserine.

It belongs to the eIF-3 subunit C family. Component of the eukaryotic translation initiation factor 3 (eIF-3) complex, which is composed of 13 subunits: EIF3A, EIF3B, EIF3C, EIF3D, EIF3E, EIF3F, EIF3G, EIF3H, EIF3I, EIF3J, EIF3K, EIF3L and EIF3M. The eIF-3 complex appears to include 3 stable modules: module A is composed of EIF3A, EIF3B, EIF3G and EIF3I; module B is composed of EIF3F, EIF3H, and EIF3M; and module C is composed of EIF3C, EIF3D, EIF3E, EIF3K and EIF3L. EIF3C of module C binds EIF3B of module A and EIF3H of module B, thereby linking the three modules. EIF3J is a labile subunit that binds to the eIF-3 complex via EIF3B. The eIF-3 complex interacts with RPS6KB1 under conditions of nutrient depletion. Mitogenic stimulation leads to binding and activation of a complex composed of MTOR and RPTOR, leading to phosphorylation and release of RPS6KB1 and binding of EIF4B to eIF-3. Identified in a HCV IRES-mediated translation complex, at least composed of EIF3C, IGF2BP1, RPS3 and HCV RNA-replicon. Interacts with ALKBH4, IFIT1 and IFIT2. Interacts with BZW2/5MP1. Phosphorylated. Phosphorylation is enhanced upon serum stimulation.

It is found in the cytoplasm. Its function is as follows. Component of the eukaryotic translation initiation factor 3 (eIF-3) complex, which is required for several steps in the initiation of protein synthesis. The eIF-3 complex associates with the 40S ribosome and facilitates the recruitment of eIF-1, eIF-1A, eIF-2:GTP:methionyl-tRNAi and eIF-5 to form the 43S pre-initiation complex (43S PIC). The eIF-3 complex stimulates mRNA recruitment to the 43S PIC and scanning of the mRNA for AUG recognition. The eIF-3 complex is also required for disassembly and recycling of post-termination ribosomal complexes and subsequently prevents premature joining of the 40S and 60S ribosomal subunits prior to initiation. The eIF-3 complex specifically targets and initiates translation of a subset of mRNAs involved in cell proliferation, including cell cycling, differentiation and apoptosis, and uses different modes of RNA stem-loop binding to exert either translational activation or repression. The sequence is that of Eukaryotic translation initiation factor 3 subunit C from Bos taurus (Bovine).